We begin with the raw amino-acid sequence, 547 residues long: Chaperonin GroEL (547 aa).

ATP-binding positions include 30 to 33, lysine 51, 87 to 91, glycine 415, 479 to 481, and aspartate 495; these read TLGP, DGTTT, and DAA.

The protein belongs to the chaperonin (HSP60) family. In terms of assembly, forms a cylinder of 14 subunits composed of two heptameric rings stacked back-to-back. Interacts with the co-chaperonin GroES.

The protein resides in the cytoplasm. The enzyme catalyses ATP + H2O + a folded polypeptide = ADP + phosphate + an unfolded polypeptide.. Together with its co-chaperonin GroES, plays an essential role in assisting protein folding. The GroEL-GroES system forms a nano-cage that allows encapsulation of the non-native substrate proteins and provides a physical environment optimized to promote and accelerate protein folding. The protein is Chaperonin GroEL of Dichelobacter nodosus (strain VCS1703A).